The primary structure comprises 558 residues: Outer membrane transporter CdiB (558 aa).

Residues 1 to 25 (MFVSSRKTGLIVCFSLIGYTASAFS) form the signal peptide. A coiled-coil region spans residues 34–62 (NETQQRQSEVIEQSRQQREALQQLNNIVQ). The POTRA domain maps to 76–151 (FTLREIRFNH…GVLQLEILEG (76 aa)).

The protein belongs to the TPS (TC 1.B.20) family.

The protein localises to the cell outer membrane. Its function is as follows. Probable outer membrane protein component of a toxin-immunity protein module, which functions as a cellular contact-dependent growth inhibition (CDI) system. CDI modules allow bacteria to communicate with and inhibit the growth of closely related neighboring bacteria in a contact-dependent fashion. This protein may be required for secretion and assembly of the CdiA toxin. In terms of biological role, probable member of a two partner secretion pathway (TPS) in which it mediates the secretion of CdiA. The chain is Outer membrane transporter CdiB (cdiB) from Dickeya dadantii (strain 3937) (Erwinia chrysanthemi (strain 3937)).